We begin with the raw amino-acid sequence, 419 residues long: UDP-N-acetylglucosamine 1-carboxyvinyltransferase (419 aa).

22–23 contacts phosphoenolpyruvate; that stretch reads KN. Arg-93 serves as a coordination point for UDP-N-acetyl-alpha-D-glucosamine. The Proton donor role is filled by Cys-117. Residue Cys-117 is modified to 2-(S-cysteinyl)pyruvic acid O-phosphothioketal. UDP-N-acetyl-alpha-D-glucosamine is bound by residues Asp-306 and Val-328.

This sequence belongs to the EPSP synthase family. MurA subfamily.

It localises to the cytoplasm. The catalysed reaction is phosphoenolpyruvate + UDP-N-acetyl-alpha-D-glucosamine = UDP-N-acetyl-3-O-(1-carboxyvinyl)-alpha-D-glucosamine + phosphate. It participates in cell wall biogenesis; peptidoglycan biosynthesis. Functionally, cell wall formation. Adds enolpyruvyl to UDP-N-acetylglucosamine. The polypeptide is UDP-N-acetylglucosamine 1-carboxyvinyltransferase (Thioalkalivibrio sulfidiphilus (strain HL-EbGR7)).